The sequence spans 464 residues: Septin homolog spn5 (464 aa).

The tract at residues 28 to 91 (QVDESSAKRS…VPNSNGKSIP (64 aa)) is disordered. Basic and acidic residues-rich tracts occupy residues 41 to 54 (ESRK…KEQI) and 69 to 81 (TAKD…KQDE). Positions 115 to 370 (NGIDINLIVV…DTFRTEKLVA (256 aa)) constitute a Septin-type G domain. The interval 125-132 (GESSLGKT) is G1 motif. Residues 125–132 (GESSLGKT), Thr-151, Gly-177, 257–265 (KADTMTSDE), Gly-304, and Arg-319 each bind GTP. The segment at 174-177 (DTPG) is G3 motif. Residues 256–259 (GKAD) form a G4 motif region. Residues 396–453 (LVEEALTKVMKEKYREKENNLELLETNLKTHHKDYKHALKKRITALEEEKNRLIKEIG) adopt a coiled-coil conformation.

Belongs to the TRAFAC class TrmE-Era-EngA-EngB-Septin-like GTPase superfamily. Septin GTPase family. In terms of assembly, component of the sporulation-specific septin complex composed of at least spn2, spn5, spn6 and spn7.

The protein resides in the nucleus. It localises to the forespore membrane. In terms of biological role, septin-like protein involved in the correct orientation of forespore membrane extension during sporulation. This is Septin homolog spn5 (spn5) from Schizosaccharomyces pombe (strain 972 / ATCC 24843) (Fission yeast).